Here is a 141-residue protein sequence, read N- to C-terminus: Nucleoside diphosphate kinase (141 aa).

The ATP site is built by Lys11, Phe59, Arg87, Thr93, Arg104, and Asn114. His117 functions as the Pros-phosphohistidine intermediate in the catalytic mechanism.

This sequence belongs to the NDK family. In terms of assembly, homotetramer. The cofactor is Mg(2+).

Its subcellular location is the cytoplasm. It catalyses the reaction a 2'-deoxyribonucleoside 5'-diphosphate + ATP = a 2'-deoxyribonucleoside 5'-triphosphate + ADP. It carries out the reaction a ribonucleoside 5'-diphosphate + ATP = a ribonucleoside 5'-triphosphate + ADP. Its function is as follows. Major role in the synthesis of nucleoside triphosphates other than ATP. The ATP gamma phosphate is transferred to the NDP beta phosphate via a ping-pong mechanism, using a phosphorylated active-site intermediate. This is Nucleoside diphosphate kinase from Legionella pneumophila (strain Lens).